The primary structure comprises 108 residues: PTS system fructose-like EIIB component 1 (108 aa).

The 101-residue stretch at 1 to 101 folds into the PTS EIIB type-2 domain; sequence MSKKLIALCA…AAGIIKEIEE (101 aa). Cysteine 11 serves as the catalytic Phosphocysteine intermediate. Position 11 is a phosphocysteine; by EIIA (cysteine 11).

The protein resides in the cytoplasm. The enzyme catalyses D-fructose(out) + N(pros)-phospho-L-histidyl-[protein] = D-fructose 1-phosphate(in) + L-histidyl-[protein]. The phosphoenolpyruvate-dependent sugar phosphotransferase system (sugar PTS), a major carbohydrate active transport system, catalyzes the phosphorylation of incoming sugar substrates concomitantly with their translocation across the cell membrane. The enzyme II FryABC PTS system is involved in fructose transport. The chain is PTS system fructose-like EIIB component 1 (fryB) from Shigella flexneri.